Consider the following 590-residue polypeptide: Pescadillo homolog (590 aa).

The BRCT domain maps to 332 to 422; sequence VCKSLFKDLK…IILPTEKYLV (91 aa). The tract at residues 561-590 is disordered; sequence AMKISQSRKRSGVEIIEQRKKRLNDTQPSS.

The protein belongs to the pescadillo family. In terms of assembly, interacts with BOP1 and WDR12. Interacts with NSN1. In terms of tissue distribution, expressed in shoot and root apical meristems, epidermal cells and vasculature of developing leaves, trichome progenitor cells, young flowers, developing pollen grains and ovules, and mature pollen grains.

Its subcellular location is the nucleus. The protein localises to the nucleolus. It localises to the nucleoplasm. Functionally, required for maturation of ribosomal RNAs and formation of the large ribosomal subunit. Plays an essential role in cell growth and survival through its regulation of ribosome biogenesis and mitotic progression. Required for normal root cell growth and differentiation. This Arabidopsis thaliana (Mouse-ear cress) protein is Pescadillo homolog.